The sequence spans 181 residues: ATP-dependent protease subunit HslV (181 aa).

Residue T9 is part of the active site. Na(+) contacts are provided by G164, C167, and T170.

Belongs to the peptidase T1B family. HslV subfamily. A double ring-shaped homohexamer of HslV is capped on each side by a ring-shaped HslU homohexamer. The assembly of the HslU/HslV complex is dependent on binding of ATP.

The protein resides in the cytoplasm. The enzyme catalyses ATP-dependent cleavage of peptide bonds with broad specificity.. With respect to regulation, allosterically activated by HslU binding. Its function is as follows. Protease subunit of a proteasome-like degradation complex believed to be a general protein degrading machinery. The polypeptide is ATP-dependent protease subunit HslV (Gemmatimonas aurantiaca (strain DSM 14586 / JCM 11422 / NBRC 100505 / T-27)).